Consider the following 310-residue polypeptide: Probable manganese-dependent inorganic pyrophosphatase (310 aa).

Mn(2+)-binding residues include histidine 9, aspartate 13, aspartate 15, aspartate 76, histidine 98, and aspartate 150.

This sequence belongs to the PPase class C family. In terms of assembly, homodimer. Requires Mn(2+) as cofactor.

The protein resides in the cytoplasm. The catalysed reaction is diphosphate + H2O = 2 phosphate + H(+). In Streptococcus mutans serotype c (strain ATCC 700610 / UA159), this protein is Probable manganese-dependent inorganic pyrophosphatase (ppaC).